The sequence spans 310 residues: Ninja-family protein 3 (310 aa).

Disordered regions lie at residues 1–29 (MASRDFLGRFGGEKGASSDKAGGGAGEPD), 68–140 (SLPG…DDAQ), and 156–215 (DQGN…EQPP). Over residues 99-108 (ERWRRREMQS) the composition is skewed to basic and acidic residues. Polar residues-rich tracts occupy residues 156–166 (DQGNASSSMPE) and 176–193 (KSTSSMEISSDNNNQNKS).

It belongs to the Ninja family.

The protein resides in the nucleus. The protein is Ninja-family protein 3 (AFP-D1) of Triticum aestivum (Wheat).